The sequence spans 130 residues: Histone H2A type 2 (130 aa).

The segment at 1-22 (MSGRGKQGGKTRAKSKTRSSRA) is disordered. N-acetylserine is present on serine 2. A Phosphoserine modification is found at serine 2. Lysine 6 carries the N6-(2-hydroxyisobutyryl)lysine modification. N6-acetyllysine is present on lysine 6. Residues 7 to 19 (QGGKTRAKSKTRS) are compositionally biased toward basic residues. N6-(2-hydroxyisobutyryl)lysine; alternate is present on lysine 10. Lysine 10 bears the N6-lactoyllysine; alternate mark. Position 10 is an N6-succinyllysine (lysine 10). Residues lysine 14 and lysine 16 each participate in a glycyl lysine isopeptide (Lys-Gly) (interchain with G-Cter in ubiquitin) cross-link. Residue lysine 37 is modified to N6-(2-hydroxyisobutyryl)lysine; alternate. Lysine 76 is subject to N6-(2-hydroxyisobutyryl)lysine. Residue lysine 96 is modified to N6-(2-hydroxyisobutyryl)lysine; alternate. Lysine 96 carries the post-translational modification N6-succinyllysine. Position 96 is an N6-glutaryllysine; alternate (lysine 96). Glutamine 105 is modified (N5-methylglutamine). Lysine 119 is subject to N6-(2-hydroxyisobutyryl)lysine; alternate. Position 119 is an N6-glutaryllysine; alternate (lysine 119). Residue lysine 120 forms a Glycyl lysine isopeptide (Lys-Gly) (interchain with G-Cter in ubiquitin) linkage.

The protein belongs to the histone H2A family. The nucleosome is a histone octamer containing two molecules each of H2A, H2B, H3 and H4 assembled in one H3-H4 heterotetramer and two H2A-H2B heterodimers. The octamer wraps approximately 147 bp of DNA. Monoubiquitination of Lys-120 (H2AK119Ub) gives a specific tag for epigenetic transcriptional repression. Following DNA double-strand breaks (DSBs), it is ubiquitinated through 'Lys-63' linkage of ubiquitin moieties, leading to the recruitment of repair proteins to sites of DNA damage. H2AK119Ub and ionizing radiation-induced 'Lys-63'-linked ubiquitination are distinct events. Post-translationally, phosphorylation on Ser-2 is enhanced during mitosis. Phosphorylation on Ser-2 directly represses transcription. In terms of processing, glutamine methylation at Gln-105 (H2AQ104me) by FBL is specifically dedicated to polymerase I. It is present at 35S ribosomal DNA locus and impairs binding of the FACT complex.

Its subcellular location is the nucleus. It localises to the chromosome. Functionally, core component of nucleosome. Nucleosomes wrap and compact DNA into chromatin, limiting DNA accessibility to the cellular machineries which require DNA as a template. Histones thereby play a central role in transcription regulation, DNA repair, DNA replication and chromosomal stability. DNA accessibility is regulated via a complex set of post-translational modifications of histones, also called histone code, and nucleosome remodeling. The chain is Histone H2A type 2 from Xenopus laevis (African clawed frog).